The following is a 143-amino-acid chain: Succinate dehydrogenase assembly factor 2, mitochondrial (143 aa).

This sequence belongs to the SDHAF2 family. In terms of assembly, interacts with the flavoprotein subunit within the SDH catalytic dimer.

The protein localises to the mitochondrion matrix. In terms of biological role, plays an essential role in the assembly of succinate dehydrogenase (SDH), an enzyme complex (also referred to as respiratory complex II) that is a component of both the tricarboxylic acid (TCA) cycle and the mitochondrial electron transport chain, and which couples the oxidation of succinate to fumarate with the reduction of ubiquinone (coenzyme Q) to ubiquinol. Required for flavinylation (covalent attachment of FAD) of the flavoprotein subunit of the SDH catalytic dimer. The polypeptide is Succinate dehydrogenase assembly factor 2, mitochondrial (Schizosaccharomyces japonicus (strain yFS275 / FY16936) (Fission yeast)).